We begin with the raw amino-acid sequence, 60 residues long: Protein P7 (60 aa).

The chain crosses the membrane as a helical span at residues 28–48 (FIGVTLIGMFISYYLYALISI).

It is found in the host membrane. The protein is Protein P7 of Vitis vinifera (Grape).